A 413-amino-acid chain; its full sequence is E3 ubiquitin-protein ligase makorin (413 aa).

2 C3H1-type zinc fingers span residues Pro2–Ala29 and Thr30–Pro57. The tract at residues Glu61–Arg85 is disordered. Low complexity predominate over residues Ser66–Gln82. The C3H1-type 3 zinc finger occupies Gln138 to Tyr167. An RING-type zinc finger spans residues Cys213 to Arg267. Residues Asn296–Pro327 form a C3H1-type 4 zinc finger.

In terms of assembly, component of a complex at least containing lep-2, lin-28 and the long non-coding RNA lep-5, which mediates the degradation of lin-28. In terms of tissue distribution, expressed in seam, tail tip, and other hypodermal cells, head and tail neurons, the pharynx, intestine and the developing hermaphrodite somatic gonad. Not expressed in body wall muscle cells.

Its subcellular location is the cytoplasm. The enzyme catalyses S-ubiquitinyl-[E2 ubiquitin-conjugating enzyme]-L-cysteine + [acceptor protein]-L-lysine = [E2 ubiquitin-conjugating enzyme]-L-cysteine + N(6)-ubiquitinyl-[acceptor protein]-L-lysine.. It participates in protein modification; protein ubiquitination. In terms of biological role, E3 ubiquitin ligase which catalyzes the covalent attachment of ubiquitin moieties onto substrate proteins. Promotes the larval to adult transition by binding to the long non-coding RNA lep-5 to target the heterochronic protein lin-28 for degradation by the proteasome. This association and degradation of lin-28 also controls the timing of the sexual differentiation of individual neurons in males including the AIM, AWA, ADF, ASJ and CEM neurons. Plays a role in governing the developmental timing of male tail tip morphogenesis. Plays a role in two aspects of male mating behavior: response to hermaphrodite contact and vulva location. May play a role in the detection of preferred food sources. This chain is E3 ubiquitin-protein ligase makorin, found in Caenorhabditis elegans.